The primary structure comprises 442 residues: Dihydrolipoyllysine-residue acetyltransferase component of pyruvate dehydrogenase complex (442 aa).

The Lipoyl-binding domain maps to 2–77 (AFEFKLPDIG…TVGQTIITFD (76 aa)). N6-lipoyllysine is present on K43. Residues 84–97 (LQFKGSDESDDAKT) are compositionally biased toward basic and acidic residues. The tract at residues 84–136 (LQFKGSDESDDAKTEAQVQSTAEAGQDVAKEEQAQEPAKATGAGQQDQAEVDP) is disordered. The 38-residue stretch at 141–178 (IAMPSVRKYAREKGVDIRKVTGSGNNGRVVKEDIDSFV) folds into the Peripheral subunit-binding (PSBD) domain. Residues 182 to 208 (AQEAAPQETAAPQETAAKPAAAPAPEG) are compositionally biased toward low complexity. The interval 182–215 (AQEAAPQETAAPQETAAKPAAAPAPEGEFPETRE) is disordered. H413 is an active-site residue.

It belongs to the 2-oxoacid dehydrogenase family. In terms of assembly, forms a 24-polypeptide structural core with octahedral symmetry. Requires (R)-lipoate as cofactor.

The enzyme catalyses N(6)-[(R)-dihydrolipoyl]-L-lysyl-[protein] + acetyl-CoA = N(6)-[(R)-S(8)-acetyldihydrolipoyl]-L-lysyl-[protein] + CoA. Functionally, the pyruvate dehydrogenase complex catalyzes the overall conversion of pyruvate to acetyl-CoA and CO(2). It contains multiple copies of three enzymatic components: pyruvate dehydrogenase (E1), dihydrolipoamide acetyltransferase (E2) and lipoamide dehydrogenase (E3). The B.subtilis PDH complex also possesses branched-chain 2-oxoacid dehydrogenase (BCDH) activity. This Bacillus subtilis (strain 168) protein is Dihydrolipoyllysine-residue acetyltransferase component of pyruvate dehydrogenase complex (pdhC).